The primary structure comprises 192 residues: Holliday junction branch migration complex subunit RuvA (192 aa).

The tract at residues 1 to 64 (MIGRLTGILA…EDGHYLYGFL (64 aa)) is domain I. Residues 65–143 (TEAERFAFRQ…DATGVSLHPA (79 aa)) are domain II. The tract at residues 144–149 (VDDSKQ) is flexible linker. Residues 149 to 192 (QDISNALLALGYNEKEAASAMKQLPADVSTSDGIRAALKLLSKV) form a domain III region.

Belongs to the RuvA family. Homotetramer. Forms an RuvA(8)-RuvB(12)-Holliday junction (HJ) complex. HJ DNA is sandwiched between 2 RuvA tetramers; dsDNA enters through RuvA and exits via RuvB. An RuvB hexamer assembles on each DNA strand where it exits the tetramer. Each RuvB hexamer is contacted by two RuvA subunits (via domain III) on 2 adjacent RuvB subunits; this complex drives branch migration. In the full resolvosome a probable DNA-RuvA(4)-RuvB(12)-RuvC(2) complex forms which resolves the HJ.

The protein localises to the cytoplasm. Its function is as follows. The RuvA-RuvB-RuvC complex processes Holliday junction (HJ) DNA during genetic recombination and DNA repair, while the RuvA-RuvB complex plays an important role in the rescue of blocked DNA replication forks via replication fork reversal (RFR). RuvA specifically binds to HJ cruciform DNA, conferring on it an open structure. The RuvB hexamer acts as an ATP-dependent pump, pulling dsDNA into and through the RuvAB complex. HJ branch migration allows RuvC to scan DNA until it finds its consensus sequence, where it cleaves and resolves the cruciform DNA. This is Holliday junction branch migration complex subunit RuvA from Dechloromonas aromatica (strain RCB).